The chain runs to 368 residues: Phosphate acyltransferase (368 aa).

Residues 337 to 368 (LGDGEHDAGGAGQASPAAGHHAEPSAAQSSKA) are disordered.

This sequence belongs to the PlsX family. In terms of assembly, homodimer. Probably interacts with PlsY.

It localises to the cytoplasm. It carries out the reaction a fatty acyl-[ACP] + phosphate = an acyl phosphate + holo-[ACP]. It functions in the pathway lipid metabolism; phospholipid metabolism. Its function is as follows. Catalyzes the reversible formation of acyl-phosphate (acyl-PO(4)) from acyl-[acyl-carrier-protein] (acyl-ACP). This enzyme utilizes acyl-ACP as fatty acyl donor, but not acyl-CoA. This chain is Phosphate acyltransferase, found in Burkholderia orbicola (strain MC0-3).